The sequence spans 104 residues: Large ribosomal subunit protein bL21 (104 aa).

Belongs to the bacterial ribosomal protein bL21 family. Part of the 50S ribosomal subunit. Contacts protein L20.

In terms of biological role, this protein binds to 23S rRNA in the presence of protein L20. This Streptococcus mutans serotype c (strain ATCC 700610 / UA159) protein is Large ribosomal subunit protein bL21.